Here is a 143-residue protein sequence, read N- to C-terminus: Transcriptional regulator MraZ (143 aa).

2 SpoVT-AbrB domains span residues 5–47 and 76–119; these read EYEH…TLEE and AVEV…DRET.

It belongs to the MraZ family. Forms oligomers.

Its subcellular location is the cytoplasm. The protein localises to the nucleoid. The sequence is that of Transcriptional regulator MraZ from Staphylococcus saprophyticus subsp. saprophyticus (strain ATCC 15305 / DSM 20229 / NCIMB 8711 / NCTC 7292 / S-41).